Consider the following 441-residue polypeptide: Serine hydroxymethyltransferase (441 aa).

124-126 (GHI) is a binding site for (6S)-5,6,7,8-tetrahydrofolate. Lys239 carries the N6-(pyridoxal phosphate)lysine modification.

This sequence belongs to the SHMT family. As to quaternary structure, homodimer. Pyridoxal 5'-phosphate serves as cofactor.

It is found in the cytoplasm. It participates in amino-acid biosynthesis; glycine biosynthesis; glycine from L-serine: step 1/1. Functionally, catalyzes the reversible interconversion of serine and glycine with a modified folate serving as the one-carbon carrier. Also exhibits a pteridine-independent aldolase activity toward beta-hydroxyamino acids, producing glycine and aldehydes, via a retro-aldol mechanism. This is Serine hydroxymethyltransferase from Cenarchaeum symbiosum (strain A).